Here is a 298-residue protein sequence, read N- to C-terminus: Bifunctional protein FolD (298 aa).

NADP(+)-binding positions include 165 to 167 (GRS), Ser190, and Ile231.

Belongs to the tetrahydrofolate dehydrogenase/cyclohydrolase family. In terms of assembly, homodimer.

The catalysed reaction is (6R)-5,10-methylene-5,6,7,8-tetrahydrofolate + NADP(+) = (6R)-5,10-methenyltetrahydrofolate + NADPH. It carries out the reaction (6R)-5,10-methenyltetrahydrofolate + H2O = (6R)-10-formyltetrahydrofolate + H(+). It participates in one-carbon metabolism; tetrahydrofolate interconversion. In terms of biological role, catalyzes the oxidation of 5,10-methylenetetrahydrofolate to 5,10-methenyltetrahydrofolate and then the hydrolysis of 5,10-methenyltetrahydrofolate to 10-formyltetrahydrofolate. The sequence is that of Bifunctional protein FolD from Prochlorococcus marinus (strain MIT 9312).